The chain runs to 295 residues: Ethanolamine ammonia-lyase small subunit (295 aa).

Residues V207, E228, and C258 each coordinate adenosylcob(III)alamin.

The protein belongs to the EutC family. In terms of assembly, the basic unit is a heterodimer which dimerizes to form tetramers. The heterotetramers trimerize; 6 large subunits form a core ring with 6 small subunits projecting outwards. Requires adenosylcob(III)alamin as cofactor.

The protein localises to the bacterial microcompartment. It catalyses the reaction ethanolamine = acetaldehyde + NH4(+). The protein operates within amine and polyamine degradation; ethanolamine degradation. Catalyzes the deamination of various vicinal amino-alcohols to oxo compounds. Allows this organism to utilize ethanolamine as the sole source of nitrogen and carbon in the presence of external vitamin B12. The chain is Ethanolamine ammonia-lyase small subunit from Escherichia coli O7:K1 (strain IAI39 / ExPEC).